Reading from the N-terminus, the 226-residue chain is Ribose-5-phosphate isomerase A (226 aa).

Residues 33-36 (TGST), 86-89 (DGAD), and 99-102 (KGGG) contribute to the substrate site. Glutamate 108 serves as the catalytic Proton acceptor. Lysine 126 serves as a coordination point for substrate.

Belongs to the ribose 5-phosphate isomerase family. Homodimer.

It carries out the reaction aldehydo-D-ribose 5-phosphate = D-ribulose 5-phosphate. Its pathway is carbohydrate degradation; pentose phosphate pathway; D-ribose 5-phosphate from D-ribulose 5-phosphate (non-oxidative stage): step 1/1. Its function is as follows. Catalyzes the reversible conversion of ribose-5-phosphate to ribulose 5-phosphate. This Bordetella bronchiseptica (strain ATCC BAA-588 / NCTC 13252 / RB50) (Alcaligenes bronchisepticus) protein is Ribose-5-phosphate isomerase A.